Consider the following 163-residue polypeptide: Photosystem II extrinsic protein V (163 aa).

A signal peptide spans Met1 to Ala26. Residues Cys63, Cys66, His67, and His118 each contribute to the heme c site.

It belongs to the cytochrome c family. PsbV subfamily. In terms of assembly, PSII is composed of 1 copy each of membrane proteins PsbA, PsbB, PsbC, PsbD, PsbE, PsbF, PsbH, PsbI, PsbJ, PsbK, PsbL, PsbM, PsbT, PsbY, PsbZ, Psb30/Ycf12, at least 3 peripheral proteins of the oxygen-evolving complex and a large number of cofactors. It forms dimeric complexes. Heme c is required as a cofactor.

The protein resides in the plastid. It localises to the chloroplast thylakoid membrane. Functionally, one of the extrinsic, lumenal subunits of photosystem II (PSII). PSII is a light-driven water plastoquinone oxidoreductase, using light energy to abstract electrons from H(2)O, generating a proton gradient subsequently used for ATP formation. The extrinsic proteins stabilize the structure of photosystem II oxygen-evolving complex (OEC), the ion environment of oxygen evolution and protect the OEC against heat-induced inactivation. The sequence is that of Photosystem II extrinsic protein V from Trieres chinensis (Marine centric diatom).